The chain runs to 116 residues: Non-specific lipid-transfer protein D, cotyledon-specific isoform (116 aa).

An N-terminal signal peptide occupies residues 1–24; that stretch reads MKNIFFSVFFLLSFLLCLANVSEA. Intrachain disulfides connect C28–C76, C38–C53, C54–C98, and C74–C112.

This sequence belongs to the plant LTP family.

In terms of biological role, plant non-specific lipid-transfer proteins transfer phospholipids as well as galactolipids across membranes. May play a role in wax or cutin deposition in the cell walls of expanding epidermal cells and certain secretory tissues. The sequence is that of Non-specific lipid-transfer protein D, cotyledon-specific isoform from Ricinus communis (Castor bean).